We begin with the raw amino-acid sequence, 89 residues long: HssA/B-like protein DDB_G0295685 (89 aa).

This sequence belongs to the hssA/B family.

The protein is HssA/B-like protein DDB_G0295685 of Dictyostelium discoideum (Social amoeba).